Consider the following 408-residue polypeptide: Alkane 1-monooxygenase (408 aa).

Helical transmembrane passes span 30-50, 58-78, 102-122, and 126-146; these read LWMI…GYQF, IFAL…DTII, LVKS…YLVS, and TSFI…GIAV. Positions 150, 154, 180, 184, and 185 each coordinate Fe cation. A helical membrane pass occupies residues 254–274; it reads IIAIFGKGTIPYLVTQAFYGI. Fe cation contacts are provided by His324, His327, and His328.

It belongs to the fatty acid desaturase type 1 family. AlkB subfamily. Fe(3+) serves as cofactor.

The protein localises to the cell inner membrane. The catalysed reaction is octane + 2 reduced [rubredoxin] + O2 + 2 H(+) = 2 oxidized [rubredoxin] + octan-1-ol + H2O. It functions in the pathway hydrocarbon metabolism; alkane degradation. Its function is as follows. Catalyzes the hydroxylation of n-alkanes in the presence of a NADH-rubredoxin reductase and rubredoxin. It preferably hydroxylases long-chain-length alkanes with at least 12 carbon atoms. The polypeptide is Alkane 1-monooxygenase (alkB) (Acinetobacter baylyi (strain ATCC 33305 / BD413 / ADP1)).